A 232-amino-acid chain; its full sequence is Ribose-5-phosphate isomerase A (232 aa).

Substrate is bound by residues 34–37, 89–92, and 102–105; these read TGST, DGAD, and KGGG. The active-site Proton acceptor is the E111. K129 serves as a coordination point for substrate.

The protein belongs to the ribose 5-phosphate isomerase family. In terms of assembly, homodimer.

It carries out the reaction aldehydo-D-ribose 5-phosphate = D-ribulose 5-phosphate. It participates in carbohydrate degradation; pentose phosphate pathway; D-ribose 5-phosphate from D-ribulose 5-phosphate (non-oxidative stage): step 1/1. Its function is as follows. Catalyzes the reversible conversion of ribose-5-phosphate to ribulose 5-phosphate. In Protochlamydia amoebophila (strain UWE25), this protein is Ribose-5-phosphate isomerase A.